Here is a 211-residue protein sequence, read N- to C-terminus: Urease accessory protein UreG (211 aa).

Residue Gly11–Thr18 participates in GTP binding.

Belongs to the SIMIBI class G3E GTPase family. UreG subfamily. In terms of assembly, homodimer. UreD, UreF and UreG form a complex that acts as a GTP-hydrolysis-dependent molecular chaperone, activating the urease apoprotein by helping to assemble the nickel containing metallocenter of UreC. The UreE protein probably delivers the nickel.

The protein resides in the cytoplasm. In terms of biological role, facilitates the functional incorporation of the urease nickel metallocenter. This process requires GTP hydrolysis, probably effectuated by UreG. The polypeptide is Urease accessory protein UreG (Actinobacillus pleuropneumoniae (Haemophilus pleuropneumoniae)).